Reading from the N-terminus, the 426-residue chain is Maintenance of mitochondrial morphology protein 1 (426 aa).

Residues 1 to 100 (MTDSENESTE…KFSGWSFAQG (100 aa)) lie on the Lumenal side of the membrane. The helical transmembrane segment at 101-121 (FFVGQLSIVLLFIFFLKFFIF) threads the bilayer. The Cytoplasmic portion of the chain corresponds to 122-426 (SDEPSKSKNP…NTREEKPTEL (305 aa)). In terms of domain architecture, SMP-LTD spans 194–409 (PAESLDWFNV…EPRFQFVRLP (216 aa)).

It belongs to the MMM1 family. As to quaternary structure, homodimer. Component of the ER-mitochondria encounter structure (ERMES) or MDM complex, composed of MMM1, MDM10, MDM12 and MDM34. An MMM1 homodimer associates with one molecule of MDM12 on each side in a pairwise head-to-tail manner, and the SMP-LTD domains of MMM1 and MDM12 generate a continuous hydrophobic tunnel for phospholipid trafficking.

The protein localises to the endoplasmic reticulum membrane. Functionally, component of the ERMES/MDM complex, which serves as a molecular tether to connect the endoplasmic reticulum (ER) and mitochondria. Components of this complex are involved in the control of mitochondrial shape and protein biogenesis, and function in nonvesicular lipid trafficking between the ER and mitochondria. The MDM12-MMM1 subcomplex functions in the major beta-barrel assembly pathway that is responsible for biogenesis of all outer membrane beta-barrel proteins, and acts in a late step after the SAM complex. The MDM10-MDM12-MMM1 subcomplex further acts in the TOM40-specific pathway after the action of the MDM12-MMM1 complex. Essential for establishing and maintaining the structure of mitochondria and maintenance of mtDNA nucleoids. This Saccharomyces cerevisiae (strain AWRI1631) (Baker's yeast) protein is Maintenance of mitochondrial morphology protein 1.